We begin with the raw amino-acid sequence, 1340 residues long: TSET complex member tstE (1340 aa).

Residues 56-67 (NQSQTSPNSNDG) are compositionally biased toward low complexity. Disordered regions lie at residues 56-75 (NQSQTSPNSNDGNIGGGSGG) and 110-131 (SGSGGGGSGSNSNIGGGGGGGQ). 4 WD repeats span residues 208-246 (VNQILFNCLCFHPKSPILYAAIRNEVHFYDIITKSVIGK), 250-294 (DPTE…LQTI), 345-384 (GHKKPISAIAHHPAKTILASCSTDGQLKIWDTRNNMSFLN), and 397-436 (IEHSNHYFLVFEPTGKYLVMTGSSGLTLVYGDLTSQNPQE). The segment covering 1216 to 1251 (KSHMSSTTTLRRSPSIENIRTTSTTFDSSKFNTDNQ) has biased composition (polar residues). The interval 1216–1340 (KSHMSSTTTL…TPTPTTTLSS (125 aa)) is disordered. Acidic residues predominate over residues 1252–1275 (ELFDDDSDDDSDSGADADVDSENE). The segment covering 1286 to 1318 (ASLQHNDNSSLTNITVTDNDSNLDQDITSNTGS) has biased composition (polar residues). A compositionally biased stretch (low complexity) spans 1328 to 1340 (LSSTPTPTTTLSS).

As to quaternary structure, component of the TSET complex, a heterohexamer composed of tstA, tstB, tstC, tstD, tstE and tstF, which may act in plasma membrane turnover. tstA, tstB, tstC and tstD are likely to be the core complex members with tstE and tstF acting as associated scaffold proteins.

This Dictyostelium discoideum (Social amoeba) protein is TSET complex member tstE.